The sequence spans 447 residues: tRNA modification GTPase MnmE (447 aa).

(6S)-5-formyl-5,6,7,8-tetrahydrofolate is bound by residues arginine 22, glutamate 81, and lysine 121. The TrmE-type G domain maps to 217–373; sequence GIVLAITGET…LMSEIVSYAE (157 aa). Residue asparagine 227 participates in K(+) binding. Residues 227-232, 246-252, and 271-274 contribute to the GTP site; these read NTGKSS, SDIPGTT, and DTAG. Serine 231 contacts Mg(2+). K(+) contacts are provided by serine 246, isoleucine 248, and threonine 251. Threonine 252 provides a ligand contact to Mg(2+). Lysine 447 is a (6S)-5-formyl-5,6,7,8-tetrahydrofolate binding site.

This sequence belongs to the TRAFAC class TrmE-Era-EngA-EngB-Septin-like GTPase superfamily. TrmE GTPase family. As to quaternary structure, homodimer. Heterotetramer of two MnmE and two MnmG subunits. K(+) serves as cofactor.

The protein resides in the cytoplasm. Exhibits a very high intrinsic GTPase hydrolysis rate. Involved in the addition of a carboxymethylaminomethyl (cmnm) group at the wobble position (U34) of certain tRNAs, forming tRNA-cmnm(5)s(2)U34. The chain is tRNA modification GTPase MnmE from Orientia tsutsugamushi (strain Boryong) (Rickettsia tsutsugamushi).